A 921-amino-acid chain; its full sequence is Sodium/calcium exchanger 2 (921 aa).

An N-terminal signal peptide occupies residues 1-20; sequence MAPLALVGVALLLGAPHCLG. Residues 21–68 lie on the Extracellular side of the membrane; that stretch reads EATPTPSLPPPPANDSDASPGGCQGSYRCQPGVLLPVWEPDDPSLGDK. Positions 23–42 are disordered; the sequence is TPTPSLPPPPANDSDASPGG. Asparagine 34 carries N-linked (GlcNAc...) asparagine glycosylation. A helical transmembrane segment spans residues 69 to 90; it reads AARAVVYFVAMVYMFLGLSIIA. The Cytoplasmic portion of the chain corresponds to 91–130; that stretch reads DRFMASIEVITSKEKEITITKANGETSVGTVRIWNETVSN. Residues 131-152 traverse the membrane as a helical segment; the sequence is LTLMALGSSAPEILLSVIEVCG. Residues 135 to 175 form an Alpha-1 repeat; it reads ALGSSAPEILLSVIEVCGHNFQAGELGPGTIVGSAAFNMFV. Residues 153 to 164 lie on the Extracellular side of the membrane; the sequence is HNFQAGELGPGT. Residues 165–185 form a helical membrane-spanning segment; it reads IVGSAAFNMFVVIAVCVYVIP. The Cytoplasmic portion of the chain corresponds to 186–196; the sequence is AGESRKIKHLR. A helical membrane pass occupies residues 197–219; sequence VFFVTASWSIFAYVWLYLILAVF. Residues 220–222 are Extracellular-facing; sequence SPG. Residues 223–246 form a helical membrane-spanning segment; the sequence is VVQVWEALLTLVFFPVCVVFAWMA. At 247–720 the chain is on the cytoplasmic side; it reads DKRLLFYKYV…DGSREERLPS (474 aa). The tract at residues 248–267 is putative calmodulin-binding region; sequence KRLLFYKYVYKRYRTDPRSG. The disordered stretch occupies residues 372–391; the sequence is AADAARRPGANDGAPDDEDD. 2 consecutive Calx-beta domains span residues 384–483 and 512–612; these read GAPD…VRLL and ATVT…IELG. Glutamate 407, aspartate 443, aspartate 468, aspartate 469, isoleucine 471, glutamate 473, glutamate 476, aspartate 518, aspartate 519, aspartate 520, glutamate 536, aspartate 598, glutamate 599, and glutamate 600 together coordinate Ca(2+). Residue serine 622 is modified to Phosphoserine. Glutamate 665 lines the Ca(2+) pocket. The chain crosses the membrane as a helical span at residues 721 to 740; sequence CFDYVMHFLTVFWKVLFACL. The Extracellular portion of the chain corresponds to 741–747; the sequence is PPTEYCH. Residues 748-770 form a helical membrane-spanning segment; sequence GWACFGVCILVIGLLTALIGDLA. Topologically, residues 771–772 are cytoplasmic; it reads SH. The chain crosses the membrane as a helical span at residues 773-791; sequence FGCTVGLKDSVNAVVFVAL. One copy of the Alpha-2 repeat lies at 790 to 826; sequence ALGTSIPDTFASKVAALQDQCADASIGNVTGSNAVNV. The Extracellular portion of the chain corresponds to 792–822; that stretch reads GTSIPDTFASKVAALQDQCADASIGNVTGSN. An N-linked (GlcNAc...) asparagine glycan is attached at asparagine 817. Residues 823 to 843 traverse the membrane as a helical segment; sequence AVNVFLGLGVAWSVAAVYWAV. Topologically, residues 844–854 are cytoplasmic; sequence QGRPFEVRTGT. Residues 855 to 875 traverse the membrane as a helical segment; that stretch reads LAFSVTLFTVFAFVGIAVLLY. The Extracellular segment spans residues 876 to 892; it reads RRRPHIGGELGGPRGPK. Residues 893–909 form a helical membrane-spanning segment; the sequence is LATTALFLGLWFLYILF. Topologically, residues 910 to 921 are cytoplasmic; that stretch reads ASLEAYCHIRGF.

This sequence belongs to the Ca(2+):cation antiporter (CaCA) (TC 2.A.19) family. SLC8 subfamily. As to expression, detected in neocortex and hippocampus on pyramidal cells, astrocyte processes and dendrites (at protein level). Brain and skeletal muscle.

It localises to the cell membrane. The protein localises to the basolateral cell membrane. Its subcellular location is the perikaryon. The protein resides in the cell projection. It is found in the dendrite. It localises to the dendritic spine. It catalyses the reaction Ca(2+)(in) + 3 Na(+)(out) = Ca(2+)(out) + 3 Na(+)(in). Its activity is regulated as follows. Calcium transport is down-regulated by Na(+) and stimulated by Ca(2+). Functionally, mediates the electrogenic exchange of Ca(2+) against Na(+) ions across the cell membrane, and thereby contributes to the regulation of cytoplasmic Ca(2+) levels and Ca(2+)-dependent cellular processes. Contributes to cellular Ca(2+) homeostasis in excitable cells. Contributes to the rapid decrease of cytoplasmic Ca(2+) levels back to baseline after neuronal activation, and thereby contributes to modulate synaptic plasticity, learning and memory. Plays a role in regulating urinary Ca(2+) and Na(+) excretion. In Rattus norvegicus (Rat), this protein is Sodium/calcium exchanger 2 (Slc8a2).